We begin with the raw amino-acid sequence, 480 residues long: DnaJ homolog subfamily A member 3, mitochondrial (480 aa).

Position 58 is an omega-N-methylarginine; by CARM1 (R58). The J domain occupies 93–158 (DYYQILGVPR…VKRKQYDAYG (66 aa)). K134 is subject to N6-acetyllysine. Residues 223-301 (GVNKEFTVNI…CRGAGQAKQK (79 aa)) form a CR-type zinc finger. C236 is a Zn(2+) binding site. 4 CXXCXGXG motif repeats span residues 236–243 (CERCDGKG), 253–260 (CHYCGGSG), 275–282 (CRRCGGRG), and 289–296 (CVVCRGAG). R238 is modified (omega-N-methylarginine; by CARM1). The Zn(2+) site is built by C239, C253, C256, C275, C278, C289, and C292. Position 293 is an omega-N-methylarginine; by CARM1 (R293). Phosphoserine is present on S398. Positions 437–468 (TVNGVTHTSTGGRTMDSSAGSKDRREAGEDNE) are disordered. Over residues 439-456 (NGVTHTSTGGRTMDSSAG) the composition is skewed to polar residues.

In terms of assembly, interacts with JAK2, HSPA9B and IFN-gammaR2 chain. Interacts with Ras GTPase-activating protein 1 (RASA1). Isoform 2 interacts with MUSK (via the cytoplasmic domain). Tyrosine phosphorylated.

The protein resides in the mitochondrion matrix. The protein localises to the cytoplasm. It localises to the cytosol. Its subcellular location is the postsynaptic cell membrane. In terms of biological role, modulates apoptotic signal transduction or effector structures within the mitochondrial matrix. Affect cytochrome C release from the mitochondria and caspase 3 activation, but not caspase 8 activation. Isoform 1 increases apoptosis triggered by both TNF and the DNA-damaging agent mytomycin C; in sharp contrast, isoform 2 suppresses apoptosis. Can modulate IFN-gamma-mediated transcriptional activity. Isoform 2 may play a role in neuromuscular junction development as an effector of the MUSK signaling pathway. The protein is DnaJ homolog subfamily A member 3, mitochondrial (Dnaja3) of Mus musculus (Mouse).